The primary structure comprises 652 residues: Beta-glucuronidase (652 aa).

Residues 1–22 (MVRGPAGAWAVLGPLLWGCGLA) form the signal peptide. N-linked (GlcNAc...) asparagine glycosylation is found at N173 and N420. Catalysis depends on E451, which acts as the Proton donor. N631 carries N-linked (GlcNAc...) asparagine glycosylation.

The protein belongs to the glycosyl hydrolase 2 family. Homotetramer.

It localises to the lysosome. It carries out the reaction a beta-D-glucuronoside + H2O = D-glucuronate + an alcohol. Inhibited by L-aspartic acid. Plays an important role in the degradation of dermatan and keratan sulfates. The protein is Beta-glucuronidase (GUSB) of Sus scrofa (Pig).